The chain runs to 494 residues: Argininosuccinate lyase (494 aa).

This sequence belongs to the lyase 1 family. Argininosuccinate lyase subfamily.

Its subcellular location is the cytoplasm. The catalysed reaction is 2-(N(omega)-L-arginino)succinate = fumarate + L-arginine. Its pathway is amino-acid biosynthesis; L-arginine biosynthesis; L-arginine from L-ornithine and carbamoyl phosphate: step 3/3. This is Argininosuccinate lyase from Methanosphaerula palustris (strain ATCC BAA-1556 / DSM 19958 / E1-9c).